The chain runs to 302 residues: Large ribosomal subunit protein bL28m (302 aa).

It belongs to the bacterial ribosomal protein bL28 family. As to quaternary structure, component of the mitochondrial ribosome large subunit (39S) which comprises a 16S rRNA and about 50 distinct proteins.

The protein resides in the mitochondrion. The sequence is that of Large ribosomal subunit protein bL28m (mRpL28) from Drosophila melanogaster (Fruit fly).